We begin with the raw amino-acid sequence, 258 residues long: Axonemal dynein light intermediate polypeptide 1 (258 aa).

Disordered stretches follow at residues 1–60 and 207–231; these read MIPP…CVPD and VNEQ…EEKK. The segment covering 34–44 has biased composition (low complexity); the sequence is SPQQPGPSGSA. Residues 176–255 are a coiled coil; that stretch reads MRKALQAEQG…LKAQLEGIIA (80 aa).

It belongs to the inner dynein arm light chain family. In terms of assembly, interacts with CFAP45. Interacts with DYNC1H1. As to expression, expressed in many tissues. A smaller 0.9 kb and a larger 2.5 kb transcripts were detected at the highest level in the testis, at medium levels in the prostate, heart, liver, lung and pancreas, at low levels in the ovary, skeletal muscle and small intestine. Not detected in spleen, colon epithelium, thymus or peripheral blood leukocytes. The 0.9 kb transcript is expressed at a 20-fold higher level than the 2.5 kb transcript in the testis. Expressed in spermatozoa and airway epithelial cells (at protein level).

The protein localises to the cell projection. Its subcellular location is the cilium. It localises to the flagellum. It is found in the dynein axonemal particle. The protein resides in the cytoplasm. Involved in sperm flagellum assembly. The protein is Axonemal dynein light intermediate polypeptide 1 of Homo sapiens (Human).